The chain runs to 380 residues: MAPNIRKSHPLLKMINNSLIDLPAPSNISAWWNFGSLLAVCLATQILTGLLLAMHYTADTSLAFWSVAHTCRNVQYGWLIRNLHANGASFFFICIFLHIGRGLYYGSYLYKETWNTGVILLLTLMATAFVGYVLPWGQMSFWGATVITNLFSAIPYIGQTLVEWAWGGFSVDNPTLTRFFALHFLLPFVIAGITIIHLTFLHESGSNNPLGISSNSDKIPFHPYYSLKDILGLALMFIPFLALALFSPNFLGDPENFTPANPLVTPPHIKPEWYFLFAYAILRSIPNKLGGVLALAASVLILLLIPFLHKSKQRTMTFRPLSQILFWLLVANLLVLTWIGSQPVEHPFIIIGQVASFSYFNILLILFPMAGALENKMLNY.

Helical transmembrane passes span 34-54 (FGSLLAVCLATQILTGLLLAM), 78-99 (WLIRNLHANGASFFFICIFLHI), 114-134 (WNTGVILLLTLMATAFVGYVL), and 179-199 (FFALHFLLPFVIAGITIIHLT). Heme b contacts are provided by H84 and H98. Heme b-binding residues include H183 and H197. H202 contributes to the a ubiquinone binding site. The next 4 membrane-spanning stretches (helical) occupy residues 227-247 (LKDILGLALMFIPFLALALFS), 289-309 (LGGVLALAASVLILLLIPFLH), 321-341 (LSQILFWLLVANLLVLTWIGS), and 348-368 (FIIIGQVASFSYFNILLILFP).

The protein belongs to the cytochrome b family. In terms of assembly, the cytochrome bc1 complex contains 11 subunits: 3 respiratory subunits (MT-CYB, CYC1 and UQCRFS1), 2 core proteins (UQCRC1 and UQCRC2) and 6 low-molecular weight proteins (UQCRH/QCR6, UQCRB/QCR7, UQCRQ/QCR8, UQCR10/QCR9, UQCR11/QCR10 and a cleavage product of UQCRFS1). This cytochrome bc1 complex then forms a dimer. The cofactor is heme b.

It is found in the mitochondrion inner membrane. Component of the ubiquinol-cytochrome c reductase complex (complex III or cytochrome b-c1 complex) that is part of the mitochondrial respiratory chain. The b-c1 complex mediates electron transfer from ubiquinol to cytochrome c. Contributes to the generation of a proton gradient across the mitochondrial membrane that is then used for ATP synthesis. The polypeptide is Cytochrome b (MT-CYB) (Polyplectron bicalcaratum (Grey peacock-pheasant)).